The sequence spans 197 residues: Inner membrane protein RclC (197 aa).

Over 1 to 15 the chain is Periplasmic; it reads MEKYLHLLSRGDKIG. A helical membrane pass occupies residues 16 to 36; it reads LTLIRLSIAIVFMWIGLLKFV. Residues 37 to 85 are Cytoplasmic-facing; it reads PYEADSITPFVANSPLMSFFYEHPEDYKQYLTHEGEYKPEARAWQTANN. A helical transmembrane segment spans residues 86–106; it reads TYGFSNGLGVVEVIIALLVLA. Residues 107–112 lie on the Periplasmic side of the membrane; the sequence is NPVNRW. The chain crosses the membrane as a helical span at residues 113 to 133; that stretch reads LGLLGGLMAFTTPLVTLSFLI. The Cytoplasmic segment spans residues 134–197; it reads TTPEAWVPAL…ESSSTLKTEY (64 aa).

It is found in the cell inner membrane. Its function is as follows. Probably involved in reactive chlorine species (RCS) stress resistance. This chain is Inner membrane protein RclC (rclC), found in Escherichia coli (strain K12).